The following is a 309-amino-acid chain: Zinc-finger homeodomain protein 5 (309 aa).

The segment covering 1–16 has biased composition (basic and acidic residues); it reads MDMRSHEMIERRREDN. The tract at residues 1–21 is disordered; it reads MDMRSHEMIERRREDNGNNNG. A ZF-HD dimerization-type; degenerate zinc finger spans residues 76–125; sequence YRECLKNHAASVGGSVHDGCGEFMPSGEEGTIEALRCAACDCHRNFHRKE. Residues 240–303 constitute a DNA-binding region (homeobox); it reads KKRFRTKFTT…NNKNNAKKPP (64 aa).

Homo- and heterodimer with other ZFHD proteins. Interacts with MIF1, MIF2 and MIF3; these interactions prevent nuclear localization and DNA-binding to inhibit transcription regulation activity. Binds to ZHD1, ZHD2, ZHD4, ZHD10 and ZHD11. As to expression, mostly expressed in flowers and inflorescence.

Its subcellular location is the nucleus. Its function is as follows. Putative transcription factor. Binds DNA at 5'-ATTA-3' consensus promoter regions. Regulates floral architecture and leaf development. Regulators in the abscisic acid (ABA) signal pathway that confers sensitivity to ABA in an ARF2-dependent manner. The protein is Zinc-finger homeodomain protein 5 (ZHD5) of Arabidopsis thaliana (Mouse-ear cress).